Here is a 172-residue protein sequence, read N- to C-terminus: 3-hydroxydecanoyl-[acyl-carrier-protein] dehydratase (172 aa).

His-71 is a catalytic residue.

It belongs to the thioester dehydratase family. FabA subfamily. Homodimer.

The protein localises to the cytoplasm. The enzyme catalyses a (3R)-hydroxyacyl-[ACP] = a (2E)-enoyl-[ACP] + H2O. The catalysed reaction is (3R)-hydroxydecanoyl-[ACP] = (2E)-decenoyl-[ACP] + H2O. It carries out the reaction (2E)-decenoyl-[ACP] = (3Z)-decenoyl-[ACP]. It participates in lipid metabolism; fatty acid biosynthesis. In terms of biological role, necessary for the introduction of cis unsaturation into fatty acids. Catalyzes the dehydration of (3R)-3-hydroxydecanoyl-ACP to E-(2)-decenoyl-ACP and then its isomerization to Z-(3)-decenoyl-ACP. Can catalyze the dehydratase reaction for beta-hydroxyacyl-ACPs with saturated chain lengths up to 16:0, being most active on intermediate chain length. The protein is 3-hydroxydecanoyl-[acyl-carrier-protein] dehydratase of Klebsiella pneumoniae subsp. pneumoniae (strain ATCC 700721 / MGH 78578).